We begin with the raw amino-acid sequence, 537 residues long: Intercellular adhesion molecule 1 (537 aa).

The N-terminal stretch at 1-27 is a signal peptide; the sequence is MASTRAKPTLPLLLALVTVVIPGPGDA. The Extracellular segment spans residues 28 to 485; that stretch reads QVSIHPREAF…LTVLYHSQNN (458 aa). 2 Ig-like C2-type domains span residues 41 to 102 and 127 to 195; these read GGSV…QSSA and GKDL…LDLR. An N-linked (GlcNAc...) asparagine glycan is attached at asparagine 47. Disulfide bonds link cysteine 48/cysteine 91, cysteine 52/cysteine 95, and cysteine 134/cysteine 188. The Cell attachment site; atypical signature appears at 151 to 153; that stretch reads RGE. Residues 179–181 carry the Cell attachment site motif; that stretch reads RGD. 9 N-linked (GlcNAc...) asparagine glycosylation sites follow: asparagine 185, asparagine 204, asparagine 267, asparagine 311, asparagine 362, asparagine 388, asparagine 409, asparagine 456, and asparagine 469. An Ig-like C2-type 3 domain is found at 232 to 299; it reads GTQQKLFCSL…LRCVLELADQ (68 aa). A disulfide bond links cysteine 239 and cysteine 292. Residues 327–381 enclose the Ig-like C2-type 4 domain; that stretch reads GSQVTVKCEAHSGSKVVLLSGVEPRPPTPQVQFTLNASSEDHKRSFFCSAALEVA. Residues cysteine 334 and cysteine 374 are joined by a disulfide bond. 3 disulfide bridges follow: cysteine 406–cysteine 422, cysteine 422–cysteine 461, and cysteine 434–cysteine 461. An Ig-like C2-type 5 domain is found at 415-468; it reads GSQQTLKCQAWGNPSPKMTCRRKADGALLPIGVVKSVKQEMNGTYVCHAFSSHG. A helical membrane pass occupies residues 486–509; it reads WTIIILVPVLLVIVGLVMAASYVY. Residues 510–537 are Cytoplasmic-facing; the sequence is NRQRKIRIYKLQKAQEEAIKLKGQAPPP.

Belongs to the immunoglobulin superfamily. ICAM family. In terms of assembly, homodimer. Interacts with MUC1 and promotes cell aggregation in epithelial cells. Interacts with ARHGEF26/SGEF. Interacts (on T cell side) with CD81, CD247 and CD9 at immunological synapses between antigen-presenting cells and T cells. Monoubiquitinated, which is promoted by MARCH9 and leads to endocytosis. Expressed at low level on a subpopulation of lymphocytes, macrophages, and endothelial cells, but is strongly induced on these cells, and on fibroblasts and epithelial cells.

The protein localises to the membrane. ICAM proteins are ligands for the leukocyte adhesion protein LFA-1 (integrin alpha-L/beta-2). During leukocyte trans-endothelial migration, ICAM1 engagement promotes the assembly of endothelial apical cups through ARHGEF26/SGEF and RHOG activation. The protein is Intercellular adhesion molecule 1 (Icam1) of Mus musculus (Mouse).